Reading from the N-terminus, the 295-residue chain is GTPase Era (295 aa).

Positions 5–172 (YCGYAAIIGR…EQAVHQLMPE (168 aa)) constitute an Era-type G domain. Residues 13 to 20 (GRPNVGKS) form a G1 region. 13–20 (GRPNVGKS) lines the GTP pocket. The segment at 39–43 (QTTRY) is G2. The tract at residues 60 to 63 (DTPG) is G3. GTP contacts are provided by residues 60-64 (DTPGL) and 121-124 (NKVD). The G4 stretch occupies residues 121–124 (NKVD). Residues 151 to 153 (LSA) are G5. The KH type-2 domain maps to 203 to 279 (LGQEIPYSLA…FLQLWVKVKS (77 aa)).

This sequence belongs to the TRAFAC class TrmE-Era-EngA-EngB-Septin-like GTPase superfamily. Era GTPase family. In terms of assembly, monomer.

The protein resides in the cytoplasm. It is found in the cell inner membrane. Functionally, an essential GTPase that binds both GDP and GTP, with rapid nucleotide exchange. Plays a role in 16S rRNA processing and 30S ribosomal subunit biogenesis and possibly also in cell cycle regulation and energy metabolism. The polypeptide is GTPase Era (Coxiella burnetii (strain CbuG_Q212) (Coxiella burnetii (strain Q212))).